The chain runs to 576 residues: Peptidoglycan D,D-transpeptidase FtsI (576 aa).

Residues 22–42 form a helical membrane-spanning segment; it reads ITILLSLIIITIILVLSRITF. The active-site Acyl-ester intermediate is S308.

This sequence belongs to the transpeptidase family. FtsI subfamily.

It localises to the cell inner membrane. The enzyme catalyses Preferential cleavage: (Ac)2-L-Lys-D-Ala-|-D-Ala. Also transpeptidation of peptidyl-alanyl moieties that are N-acyl substituents of D-alanine.. Its pathway is cell wall biogenesis; peptidoglycan biosynthesis. Functionally, catalyzes cross-linking of the peptidoglycan cell wall at the division septum. The polypeptide is Peptidoglycan D,D-transpeptidase FtsI (Buchnera aphidicola subsp. Baizongia pistaciae (strain Bp)).